Here is a 271-residue protein sequence, read N- to C-terminus: Metal-staphylopine import system ATP-binding protein CntD (271 aa).

The ABC transporter domain occupies 6–251 (VKHLTITDTW…PEHVYTKYLL (246 aa)). 38 to 45 (GESGSGKS) lines the ATP pocket.

Belongs to the ABC transporter superfamily. The complex is composed of two ATP-binding proteins (CntD and CntF), two transmembrane proteins (CntB and CntC) and a solute-binding protein (CntA).

The protein resides in the cell membrane. Nickel/cobalt import is reduced in the presence of zinc. Functionally, part of the ABC transporter complex CntABCDF (Opp1) involved in the uptake of metal in complex with the metallophore staphylopine (StP). Involved in the import of divalent metals ions such as nickel, cobalt and zinc. Probably responsible for energy coupling to the transport system. Plays a major role in nickel/cobalt import in zinc-depleted conditions. Contributes to virulence. Required for full urease activity in vitro. The polypeptide is Metal-staphylopine import system ATP-binding protein CntD (Staphylococcus aureus (strain NCTC 8325 / PS 47)).